The chain runs to 186 residues: MASEDPSVSGVSGRYATALFELARDEKVIDAVKADLDKFSAMLVESPELLRLVRSPVFGAEAQTKALGAVLDKAGIAGISANFLKLLAANRRLFVVADVIGAYRALVARFKGEATADVTVAETLSDKNLEALKLALKSVTGKDVTLNINVDPAIIGGLVVKLGSRMVDSSIRTKLNSIKHAMKEAG.

This sequence belongs to the ATPase delta chain family. As to quaternary structure, F-type ATPases have 2 components, F(1) - the catalytic core - and F(0) - the membrane proton channel. F(1) has five subunits: alpha(3), beta(3), gamma(1), delta(1), epsilon(1). CF(0) has four main subunits: a(1), b(1), b'(1) and c(10-14). The alpha and beta chains form an alternating ring which encloses part of the gamma chain. F(1) is attached to F(0) by a central stalk formed by the gamma and epsilon chains, while a peripheral stalk is formed by the delta, b and b' chains.

The protein localises to the cell inner membrane. F(1)F(0) ATP synthase produces ATP from ADP in the presence of a proton or sodium gradient. F-type ATPases consist of two structural domains, F(1) containing the extramembraneous catalytic core and F(0) containing the membrane proton channel, linked together by a central stalk and a peripheral stalk. During catalysis, ATP synthesis in the catalytic domain of F(1) is coupled via a rotary mechanism of the central stalk subunits to proton translocation. Its function is as follows. This protein is part of the stalk that links CF(0) to CF(1). It either transmits conformational changes from CF(0) to CF(1) or is implicated in proton conduction. This is ATP synthase subunit delta from Rhodopseudomonas palustris (strain BisB5).